A 630-amino-acid polypeptide reads, in one-letter code: Protein mono-ADP-ribosyltransferase PARP6 (630 aa).

C237 carries the ADP-ribosylcysteine modification. One can recognise a PARP catalytic domain in the interval 394-620; the sequence is EMTQGSYLEI…QDPKIQKEIM (227 aa). ADP-ribosyl aspartic acid is present on D600.

Belongs to the ARTD/PARP family. In terms of processing, auto-mono-ADP-ribosylated.

It catalyses the reaction L-aspartyl-[protein] + NAD(+) = 4-O-(ADP-D-ribosyl)-L-aspartyl-[protein] + nicotinamide. The enzyme catalyses L-cysteinyl-[protein] + NAD(+) = S-(ADP-D-ribosyl)-L-cysteinyl-[protein] + nicotinamide + H(+). In terms of biological role, mono-ADP-ribosyltransferase that mediates mono-ADP-ribosylation of target proteins. This is Protein mono-ADP-ribosyltransferase PARP6 from Mus musculus (Mouse).